A 281-amino-acid polypeptide reads, in one-letter code: MIDLLGLDLDGTLLSRTRQINDPTKQALANLIQKKPSLKVMILTGRSLFSTLKYVQELNELCKKPLVEYFCCYGGAKLYQLNNNQPQEQYKFLIDSRQVKTVFEIVEQHKGLFLAYLDKPKAPYIILGANQFYAWLIKQFWYKQRCEYFKNDHLTDGILKINVYFACPLRLKKVYQIIKRQFQDTLNVVNFSKHLIEITHKDGNKGYAIEAIAKKQGLSLKRMAVIGDSLNDRSMFEKVQYSFAMSKSPDELKLLATEIGTKTNRFRFSSLVDLITEKIIN.

Catalysis depends on Asp8, which acts as the Nucleophile. Residue Asp8 participates in Mg(2+) binding. Residue Leu9 participates in phosphate binding. A Mg(2+)-binding site is contributed by Asp10. Phosphate contacts are provided by residues 44-45 (TG) and Lys205. Asp228 and Ser229 together coordinate Mg(2+). Asn231 lines the phosphate pocket.

This sequence belongs to the HAD-like hydrolase superfamily. Cof family. Mg(2+) serves as cofactor.

The chain is Putative phosphatase MPN_264 from Mycoplasma pneumoniae (strain ATCC 29342 / M129 / Subtype 1) (Mycoplasmoides pneumoniae).